A 240-amino-acid polypeptide reads, in one-letter code: FMN-dependent NADH:quinone oxidoreductase 2 (240 aa).

FMN contacts are provided by residues S10 and S23–S25.

This sequence belongs to the azoreductase type 1 family. As to quaternary structure, homodimer. It depends on FMN as a cofactor.

It catalyses the reaction 2 a quinone + NADH + H(+) = 2 a 1,4-benzosemiquinone + NAD(+). The catalysed reaction is N,N-dimethyl-1,4-phenylenediamine + anthranilate + 2 NAD(+) = 2-(4-dimethylaminophenyl)diazenylbenzoate + 2 NADH + 2 H(+). In terms of biological role, quinone reductase that provides resistance to thiol-specific stress caused by electrophilic quinones. Also exhibits azoreductase activity. Catalyzes the reductive cleavage of the azo bond in aromatic azo compounds to the corresponding amines. The chain is FMN-dependent NADH:quinone oxidoreductase 2 from Idiomarina loihiensis (strain ATCC BAA-735 / DSM 15497 / L2-TR).